We begin with the raw amino-acid sequence, 253 residues long: Short chain dehydrogenase ple7 (253 aa).

A helical membrane pass occupies residues 5-25; the sequence is IVIVTGASHGIGLATVNLLLA. NADP(+) is bound by residues Val8, Arg116, Tyr148, Lys152, and Asn184. Tyr148 serves as the catalytic Proton acceptor. Catalysis depends on Lys152, which acts as the Lowers pKa of active site Tyr. N-linked (GlcNAc...) asparagine glycosylation is present at Asn187.

It belongs to the short-chain dehydrogenases/reductases (SDR) family.

It localises to the membrane. It functions in the pathway secondary metabolite biosynthesis; terpenoid biosynthesis. Short chain dehydrogenase; part of the gene cluster that mediates the biosynthesis of pleuromutilin, a tricyclic diterpene showing antibacterial properties. The geranylgeranyl diphosphate (GGPP) synthase ple4 catalyzes the first step in pleuromutilin biosynthesis. GGPP is then substrate of the premutilin synthase (PS) ple3 to yield premutilin. Premutilin synthase is a bifunctional enzyme composed of the fusion of a class II diterpene cyclase (DTC) and a class I diterpene synthase (DTS), with the corresponding domains and active sites containing characteristic aspartate-rich motifs. GGPP is first converted to mutildienyl-diphosphate (MPP) at the class II DTC site. MPP is subsequently further cyclized at the class I DTS site, followed by a 1,5-hydride shift and addition of water prior to terminating deprotonation, to yield premutilin. The cytochrome P450 monooxygenases ple5 and ple6 hydroxylate premutilin at C-11 and C-3, respectively, producing 11-hydroxypremutilin and 3-hydroxypremutilin. The combination of the actions of both ple5 and ple6 leads to the production of 3,11-dihydroxypremutilin. The short chain dehydrogenase ple7 further converts 3,11-dihydroxypremutilin into mutilin. The acetyltransferase ple2 then acetylates mutilin to produce 14-O-acetylmutilin. Finally, the cytochrome P450 monooxygenase ple1 catalyzes hydroxylation on the alpha position of the acetyl side chain of 14-O-acetylmutilin to yield pleuromutilin. The sequence is that of Short chain dehydrogenase ple7 from Rhodocybe pseudopiperita (Clitopilus pseudopiperitus).